Consider the following 40-residue polypeptide: Sulfur globule protein TR0 (40 aa).

It to C.vinosum CV1 and CV2. The protein envelope of the sulfur globules is composed of the three different proteins TR0, TR1 and TR2.

Structural protein of the sulfur globules, which are intracellular globules that serve for sulfur storage in purple sulfur bacteria. The sequence is that of Sulfur globule protein TR0 from Thiocapsa roseopersicina.